We begin with the raw amino-acid sequence, 1715 residues long: Protein PHYLLO, chloroplastic (1715 aa).

A chloroplast-targeting transit peptide spans Met1 to Arg19. The tract at residues Tyr20 to His273 is inactive isochorismate synthase. A 2-succinyl-5-enolpyruvyl-6-hydroxy-3-cyclohexene-1-carboxylate synthase region spans residues Asn363–Leu933. A helical membrane pass occupies residues Ala429 to Ala449. The O-succinylbenzoate synthase stretch occupies residues Phe981–Gly1364. The active-site Proton donor; for the o-succinylbenzoate synthase activity is Lys1170. Mg(2+) contacts are provided by Asp1202, Glu1228, and Asp1251. Lys1279 acts as the Proton acceptor; for the o-succinylbenzoate synthase activity in catalysis. A 2-succinyl-6-hydroxy-2,4-cyclohexadiene-1-carboxylate synthase region spans residues His1418–Met1715. The region spanning Leu1435 to Pro1540 is the AB hydrolase-1 domain.

In the N-terminal section; belongs to the isochorismate synthase family. This sequence in the 2nd section; belongs to the TPP enzyme family. MenD subfamily. It in the 3rd section; belongs to the mandelate racemase/muconate lactonizing enzyme family. MenC type 1 subfamily. The protein in the C-terminal section; belongs to the AB hydrolase superfamily. MenH family. Mg(2+) is required as a cofactor. It depends on Mn(2+) as a cofactor. Requires thiamine diphosphate as cofactor.

It is found in the plastid. It localises to the chloroplast membrane. It carries out the reaction isochorismate + 2-oxoglutarate + H(+) = 5-enolpyruvoyl-6-hydroxy-2-succinyl-cyclohex-3-ene-1-carboxylate + CO2. It catalyses the reaction (1R,6R)-6-hydroxy-2-succinyl-cyclohexa-2,4-diene-1-carboxylate = 2-succinylbenzoate + H2O. The enzyme catalyses 5-enolpyruvoyl-6-hydroxy-2-succinyl-cyclohex-3-ene-1-carboxylate = (1R,6R)-6-hydroxy-2-succinyl-cyclohexa-2,4-diene-1-carboxylate + pyruvate. Functionally, multifunctional enzyme required for phylloquinone (vitamin K1) biosynthesis. The polypeptide is Protein PHYLLO, chloroplastic (PHYLLO) (Arabidopsis thaliana (Mouse-ear cress)).